The sequence spans 214 residues: Redox-sensing transcriptional repressor Rex (214 aa).

A DNA-binding region (H-T-H motif) is located at residues 16–55; the sequence is IYFRYLNVLKDANKQRVSSTELSEAVQVDSATIRRDFSYF. Residue 90 to 95 coordinates NAD(+); sequence GVGSLG.

The protein belongs to the transcriptional regulatory Rex family. In terms of assembly, homodimer.

The protein localises to the cytoplasm. In terms of biological role, modulates transcription in response to changes in cellular NADH/NAD(+) redox state. This chain is Redox-sensing transcriptional repressor Rex, found in Limosilactobacillus reuteri (strain DSM 20016) (Lactobacillus reuteri).